A 238-amino-acid polypeptide reads, in one-letter code: Cysteine-rich venom protein pseudechetoxin-like (238 aa).

A signal peptide spans 1 to 19 (MIAFTVLLSLAAVLQQSSG). Positions 20–28 (TVDFASESS) are excised as a propeptide. Residues 38–164 (VDKHNDLRRS…STKYLYVCQY (127 aa)) form the SCP domain. Cystine bridges form between Cys75/Cys153, Cys92/Cys165, Cys148/Cys162, Cys184/Cys191, Cys187/Cys196, Cys200/Cys233, Cys209/Cys227, and Cys218/Cys231. The 34-residue stretch at 200–233 (CKHNNDFSNCKALAKKSKCQTEWIKSKCPATCFC) folds into the ShKT domain.

The protein belongs to the CRISP family. In terms of tissue distribution, expressed by the venom gland.

The protein localises to the secreted. Functionally, blocks olfactory (CNGA2) and retinal (CNGA1) CNG channel currents. Does not affect neither depolarization- nor caffeine-induced contraction of smooth muscle. The chain is Cysteine-rich venom protein pseudechetoxin-like from Oxyuranus scutellatus scutellatus (Australian taipan).